Consider the following 700-residue polypeptide: Elongation factor G 1 (700 aa).

Residues 8-290 enclose the tr-type G domain; the sequence is QNYRNIGISA…AVIEFMPSPI (283 aa). Residues 17–24, 88–92, and 142–145 each bind GTP; these read AHIDAGKT, DTPGH, and NKMD.

The protein belongs to the TRAFAC class translation factor GTPase superfamily. Classic translation factor GTPase family. EF-G/EF-2 subfamily.

The protein localises to the cytoplasm. Functionally, catalyzes the GTP-dependent ribosomal translocation step during translation elongation. During this step, the ribosome changes from the pre-translocational (PRE) to the post-translocational (POST) state as the newly formed A-site-bound peptidyl-tRNA and P-site-bound deacylated tRNA move to the P and E sites, respectively. Catalyzes the coordinated movement of the two tRNA molecules, the mRNA and conformational changes in the ribosome. This is Elongation factor G 1 from Polaromonas sp. (strain JS666 / ATCC BAA-500).